A 212-amino-acid chain; its full sequence is Imidazole glycerol phosphate synthase subunit HisH 2 (212 aa).

Residues 3–212 (RVAIIDYGIN…LMSNFLQWNP (210 aa)) form the Glutamine amidotransferase type-1 domain. C82 (nucleophile) is an active-site residue. Residues H192 and E194 contribute to the active site.

Heterodimer of HisH and HisF.

The protein localises to the cytoplasm. It catalyses the reaction 5-[(5-phospho-1-deoxy-D-ribulos-1-ylimino)methylamino]-1-(5-phospho-beta-D-ribosyl)imidazole-4-carboxamide + L-glutamine = D-erythro-1-(imidazol-4-yl)glycerol 3-phosphate + 5-amino-1-(5-phospho-beta-D-ribosyl)imidazole-4-carboxamide + L-glutamate + H(+). The catalysed reaction is L-glutamine + H2O = L-glutamate + NH4(+). Its pathway is amino-acid biosynthesis; L-histidine biosynthesis; L-histidine from 5-phospho-alpha-D-ribose 1-diphosphate: step 5/9. Functionally, IGPS catalyzes the conversion of PRFAR and glutamine to IGP, AICAR and glutamate. The HisH subunit provides the glutamine amidotransferase activity that produces the ammonia necessary to HisF for the synthesis of IGP and AICAR. The sequence is that of Imidazole glycerol phosphate synthase subunit HisH 2 from Nitrobacter winogradskyi (strain ATCC 25391 / DSM 10237 / CIP 104748 / NCIMB 11846 / Nb-255).